The chain runs to 438 residues: Methylenetetrahydrofolate--tRNA-(uracil-5-)-methyltransferase TrmFO (438 aa).

An FAD-binding site is contributed by Gly-9–Gly-14.

It belongs to the MnmG family. TrmFO subfamily. Requires FAD as cofactor.

It is found in the cytoplasm. It carries out the reaction uridine(54) in tRNA + (6R)-5,10-methylene-5,6,7,8-tetrahydrofolate + NADH + H(+) = 5-methyluridine(54) in tRNA + (6S)-5,6,7,8-tetrahydrofolate + NAD(+). The catalysed reaction is uridine(54) in tRNA + (6R)-5,10-methylene-5,6,7,8-tetrahydrofolate + NADPH + H(+) = 5-methyluridine(54) in tRNA + (6S)-5,6,7,8-tetrahydrofolate + NADP(+). Catalyzes the folate-dependent formation of 5-methyl-uridine at position 54 (M-5-U54) in all tRNAs. This chain is Methylenetetrahydrofolate--tRNA-(uracil-5-)-methyltransferase TrmFO, found in Lactobacillus gasseri (strain ATCC 33323 / DSM 20243 / BCRC 14619 / CIP 102991 / JCM 1131 / KCTC 3163 / NCIMB 11718 / NCTC 13722 / AM63).